The primary structure comprises 37 residues: Esculentin-2JDb (37 aa).

Cys31 and Cys37 form a disulfide bridge.

As to expression, expressed by the skin glands.

It is found in the secreted. Functionally, has antibacterial activity against E.coli and S.aureus strains. The polypeptide is Esculentin-2JDb (Odorrana jingdongensis (Jingdong frog)).